A 743-amino-acid chain; its full sequence is Myb-related protein B (743 aa).

The segment at 1–29 is disordered; that stretch reads MSRRSRGDDLEDLQYQDTDSDVPEPKENR. The segment covering 9-22 has biased composition (acidic residues); the sequence is DLEDLQYQDTDSDV. HTH myb-type domains follow at residues 26–77, 78–133, and 134–184; these read KENR…LRVL, HPDL…NPEV, and KKSS…KRKV. 3 DNA-binding regions (H-T-H motif) span residues 54-77, 106-129, and 157-180; these read WKTIASNLNNRTEQQCQHRWLRVL, WTLIAKQLRGRMGKQCRERWHNHL, and WAEIAKLLPGRTDNAVKNHWNSTI. Disordered stretches follow at residues 221–262 and 381–406; these read VERS…SESA and VTENGGSITTSVTEANSMTPKSTPVK.

Component of the DREAM complex.

The protein resides in the nucleus. The polypeptide is Myb-related protein B (mybl2) (Xenopus laevis (African clawed frog)).